Reading from the N-terminus, the 468-residue chain is FAD-linked oxidoreductase hasG (468 aa).

The region spanning 37–211 is the FAD-binding PCMH-type domain; that stretch reads LGKIPAAVVQ…VEATFRAYPW (175 aa).

The protein belongs to the oxygen-dependent FAD-linked oxidoreductase family. Requires FAD as cofactor.

Its pathway is secondary metabolite biosynthesis. In terms of biological role, FAD-linked oxidoreductase; part of the gene cluster that mediates the biosynthesis of hexadehydro-astechrome (HAS), a tryptophan-derived iron(III)-complex that acts as a virulence factor in infected mice. Within the pathway, hasG converts the prenyl to a methylbutadienyl side chain. The HAS biosynthesis begins with the synthesis of a tethered Trp-Ala dipeptide by the NRPS hasD. The 7-dimethylallyltryptophan synthase hasE then catalyzes the prenylation of the hasD-tethered tryptophan or the resulting tethered Trp-Ala dipeptide at the C-7 position of the indole moiety. HAS biosynthesis continues via tethered intermediates with the succesive actions of the cytochrome P450 monooxygenase hasH, the O-methyltransferase hasC, and the FAD-linked oxidoreductase hasG. The resulting O-methylated diketopiperazine is then released from hasD. Finally, three O-methylated diketopiperazine molecules assemble in a trimeric complex with Fe(III) to produce hexadehydro-astechrome. The polypeptide is FAD-linked oxidoreductase hasG (Aspergillus fumigatus (strain CBS 144.89 / FGSC A1163 / CEA10) (Neosartorya fumigata)).